We begin with the raw amino-acid sequence, 208 residues long: MARYIGPSCRLCRRENMELFLKGDRCYTDKCALKRRNYPPGQHGQGRSKTSDYGVQLREKQKVKRLYGLLEKQFRSYFDRADRMKGVTGENLLSLLERRLDNVVYRLGFASSRSEARQLVRHGHFVLNGRKATIPSIQVKAGDTIVLREKSRNVAAISEALDAVVRRGIPQWLELDRDAFTGLAKTVPVREDISTPIQEQLIVELYSK.

The region spanning 98–159 is the S4 RNA-binding domain; it reads RRLDNVVYRL…KSRNVAAISE (62 aa).

This sequence belongs to the universal ribosomal protein uS4 family. As to quaternary structure, part of the 30S ribosomal subunit. Contacts protein S5. The interaction surface between S4 and S5 is involved in control of translational fidelity.

Its function is as follows. One of the primary rRNA binding proteins, it binds directly to 16S rRNA where it nucleates assembly of the body of the 30S subunit. Functionally, with S5 and S12 plays an important role in translational accuracy. The protein is Small ribosomal subunit protein uS4 of Trichlorobacter lovleyi (strain ATCC BAA-1151 / DSM 17278 / SZ) (Geobacter lovleyi).